Reading from the N-terminus, the 227-residue chain is Cytochrome c oxidase subunit 2 (227 aa).

The Mitochondrial intermembrane portion of the chain corresponds to 1-14; sequence MAYPFQLGLQDATS. A helical transmembrane segment spans residues 15 to 45; sequence PIMEELTNFHDHTLMIVFLISSLVLYLISLM. Over 46-59 the chain is Mitochondrial matrix; the sequence is LTTKLIHTNTMDAQ. The chain crosses the membrane as a helical span at residues 60 to 87; it reads EVETVWTILPAIILIMIALPSLRILYLM. Residues 88–227 lie on the Mitochondrial intermembrane side of the membrane; that stretch reads DEINNPVLTV…LFENWSTSMI (140 aa). Positions 161, 196, 198, 200, 204, and 207 each coordinate Cu cation. Glu-198 contributes to the Mg(2+) binding site.

This sequence belongs to the cytochrome c oxidase subunit 2 family. As to quaternary structure, component of the cytochrome c oxidase (complex IV, CIV), a multisubunit enzyme composed of 14 subunits. The complex is composed of a catalytic core of 3 subunits MT-CO1, MT-CO2 and MT-CO3, encoded in the mitochondrial DNA, and 11 supernumerary subunits COX4I, COX5A, COX5B, COX6A, COX6B, COX6C, COX7A, COX7B, COX7C, COX8 and NDUFA4, which are encoded in the nuclear genome. The complex exists as a monomer or a dimer and forms supercomplexes (SCs) in the inner mitochondrial membrane with NADH-ubiquinone oxidoreductase (complex I, CI) and ubiquinol-cytochrome c oxidoreductase (cytochrome b-c1 complex, complex III, CIII), resulting in different assemblies (supercomplex SCI(1)III(2)IV(1) and megacomplex MCI(2)III(2)IV(2)). Found in a complex with TMEM177, COA6, COX18, COX20, SCO1 and SCO2. Interacts with TMEM177 in a COX20-dependent manner. Interacts with COX20. Interacts with COX16. The cofactor is Cu cation.

The protein resides in the mitochondrion inner membrane. It carries out the reaction 4 Fe(II)-[cytochrome c] + O2 + 8 H(+)(in) = 4 Fe(III)-[cytochrome c] + 2 H2O + 4 H(+)(out). In terms of biological role, component of the cytochrome c oxidase, the last enzyme in the mitochondrial electron transport chain which drives oxidative phosphorylation. The respiratory chain contains 3 multisubunit complexes succinate dehydrogenase (complex II, CII), ubiquinol-cytochrome c oxidoreductase (cytochrome b-c1 complex, complex III, CIII) and cytochrome c oxidase (complex IV, CIV), that cooperate to transfer electrons derived from NADH and succinate to molecular oxygen, creating an electrochemical gradient over the inner membrane that drives transmembrane transport and the ATP synthase. Cytochrome c oxidase is the component of the respiratory chain that catalyzes the reduction of oxygen to water. Electrons originating from reduced cytochrome c in the intermembrane space (IMS) are transferred via the dinuclear copper A center (CU(A)) of subunit 2 and heme A of subunit 1 to the active site in subunit 1, a binuclear center (BNC) formed by heme A3 and copper B (CU(B)). The BNC reduces molecular oxygen to 2 water molecules using 4 electrons from cytochrome c in the IMS and 4 protons from the mitochondrial matrix. The polypeptide is Cytochrome c oxidase subunit 2 (MT-CO2) (Gerbillurus vallinus (Brush-tailed hairy-footed gerbil)).